We begin with the raw amino-acid sequence, 277 residues long: Sulfur carrier protein FdhD (277 aa).

The active-site Cysteine persulfide intermediate is C123. A Mo-bis(molybdopterin guanine dinucleotide)-binding site is contributed by 263 to 268 (FVRGNK).

This sequence belongs to the FdhD family.

The protein resides in the cytoplasm. In terms of biological role, required for formate dehydrogenase (FDH) activity. Acts as a sulfur carrier protein that transfers sulfur from IscS to the molybdenum cofactor prior to its insertion into FDH. The sequence is that of Sulfur carrier protein FdhD from Corynebacterium efficiens (strain DSM 44549 / YS-314 / AJ 12310 / JCM 11189 / NBRC 100395).